The following is a 572-amino-acid chain: Bilirubin oxidase (572 aa).

Residues 1–19 form the signal peptide; the sequence is MFKHTLGAAALSLLFNSNA. Residues 20–38 constitute a propeptide that is removed on maturation; that stretch reads VQASPVPETSPATGHLFKR. Plastocyanin-like domains follow at residues 98 to 194 and 404 to 526; these read VGYD…YMLT and VAFA…VFVD. Cu cation contacts are provided by H132, H134, H172, H174, H436, H439, H441, H494, C495, H496, H500, and M505. N-linked (GlcNAc...) asparagine glycans are attached at residues N510 and N520.

Belongs to the multicopper oxidase family. It depends on Cu cation as a cofactor.

It catalyses the reaction 2 (4Z,15Z)-bilirubin IXalpha + O2 = 2 biliverdin IXalpha + 2 H2O. In terms of biological role, oxidation of bilirubin and other tetrapyrroles. The chain is Bilirubin oxidase from Albifimbria verrucaria (Myrothecium leaf spot and pod blight fungus).